The chain runs to 89 residues: MNIRPLADRVLIKPAAAEEKTLGGIIIPDSAKEKPLKGEIVAVGNGTKDEEMVVKVGDNVLYGKYAGTEIELDGEKYLIMRQADVLAII.

This sequence belongs to the GroES chaperonin family. As to quaternary structure, heptamer of 7 subunits arranged in a ring. Interacts with the chaperonin GroEL.

The protein localises to the cytoplasm. Its function is as follows. Together with the chaperonin GroEL, plays an essential role in assisting protein folding. The GroEL-GroES system forms a nano-cage that allows encapsulation of the non-native substrate proteins and provides a physical environment optimized to promote and accelerate protein folding. GroES binds to the apical surface of the GroEL ring, thereby capping the opening of the GroEL channel. This is Co-chaperonin GroES from Parabacteroides distasonis (strain ATCC 8503 / DSM 20701 / CIP 104284 / JCM 5825 / NCTC 11152).